Consider the following 244-residue polypeptide: MLEIVYQDEYLVAVNKPAGMLVHRSWLDKHETEFVMQTLRDQIGQHVFPLHRLDRPTSGVLVFALSSQIASEVMPMFANHEMEKTYHAIVRGWIEEANVLDYPLKEELDKIADKFAKQDKEAQSAVTAYRPLAKVELPIATGKFATTRYCLMEMQPKTGRKHQLRRHMAHLRHPIVGDTTHGDGVHNRLFREHFSAQRLMLHASELRFMHPYTQQPLVIRAGLDEVWQGLLSEFGWQESLLINA.

Asp54 is a catalytic residue.

This sequence belongs to the pseudouridine synthase RluA family.

The enzyme catalyses uridine(65) in tRNA = pseudouridine(65) in tRNA. Functionally, responsible for synthesis of pseudouridine from uracil-65 in transfer RNAs. The sequence is that of tRNA pseudouridine synthase C (truC) from Vibrio cholerae serotype O1 (strain ATCC 39315 / El Tor Inaba N16961).